The sequence spans 420 residues: UDP-glucuronic acid decarboxylase 1 (420 aa).

At Met-1 the chain carries N-acetylmethionine. The Cytoplasmic portion of the chain corresponds to 1-19 (MVSKGLLRLVSSVNRRRMK). Residues 20–40 (LLLGIALFAYAASVWGNFVNM) form a helical; Signal-anchor for type II membrane protein membrane-spanning segment. Over 41 to 420 (RSIQENGELK…RVKKGRTRHS (380 aa)) the chain is Lumenal. Thr-94 is modified (phosphothreonine). Positions 98, 99, 100, 119, 120, 122, 123, 124, 144, and 145 each coordinate NAD(+). Leu-149 and Tyr-150 together coordinate UDP-alpha-D-glucuronate. Residues Leu-159 and Ser-161 each contribute to the NAD(+) site. A UDP-alpha-D-glucuronate-binding site is contributed by Lys-177. Thr-178 is a binding site for NAD(+). Residues Asn-185, Gly-188, Lys-191, and Arg-192 each coordinate UDP-alpha-D-glucuronate. NAD(+)-binding residues include Ala-200, Tyr-231, and Lys-235. Tyr-231 functions as the Proton acceptor in the catalytic mechanism. The UDP-alpha-D-glucuronate site is built by Tyr-245, Gln-248, and Glu-249. 3 residues coordinate NAD(+): Thr-261, His-267, and Arg-272. An N-linked (GlcNAc...) asparagine glycan is attached at Asn-316.

The protein belongs to the NAD(P)-dependent epimerase/dehydratase family. UDP-glucuronic acid decarboxylase subfamily. Homodimer and homotetramer. Interacts with AKT1. NAD(+) is required as a cofactor.

It localises to the golgi apparatus. Its subcellular location is the golgi stack membrane. The enzyme catalyses UDP-alpha-D-glucuronate + H(+) = UDP-alpha-D-xylose + CO2. The protein operates within nucleotide-sugar biosynthesis; UDP-alpha-D-xylose biosynthesis; UDP-alpha-D-xylose from UDP-alpha-D-glucuronate: step 1/1. Functionally, catalyzes the NAD-dependent decarboxylation of UDP-glucuronic acid to UDP-xylose. Necessary for the biosynthesis of the core tetrasaccharide in glycosaminoglycan biosynthesis. The protein is UDP-glucuronic acid decarboxylase 1 (Uxs1) of Mus musculus (Mouse).